Here is a 104-residue protein sequence, read N- to C-terminus: MAKKTKSKVNTINAKLQLVMKSGKYVLGTQQALTTLRQGRSKLVVIANNCPPIRRAEVEYYCTLSKTPIHHYSGNNLDLGTACGKPFRTCVLSVTNVGDSDIAT.

The protein belongs to the eukaryotic ribosomal protein eL30 family.

The sequence is that of Large ribosomal subunit protein eL30 (RPL30) from Leishmania major.